The primary structure comprises 531 residues: PHD finger protein 21B (531 aa).

4 disordered regions span residues 79 to 99, 184 to 222, 238 to 277, and 295 to 314; these read PDSLPVAPGRDRPPKQPPTFQ, SADNKPPPRLLSSPHPATHHCPLHPSSLPLTPPSPSLSP, VQTQPESTAESRPPTEEPSQGAQATKKKKEDRPPTQENPE, and EIQSKRQERKRRSTANPAYS. A compositionally biased stretch (basic and acidic residues) spans 265–277; sequence KKEDRPPTQENPE. The PHD-type zinc-finger motif lies at 352 to 399; the sequence is DEHCAACKRGANLQPCGTCPGAYHLSCLEPPLKTAPKGVWVCPRCQQK. A coiled-coil region spans residues 423 to 465; sequence KTVKEEEKQKLLQRGSELQNEHQQLEERDRRLASAVQKCLELK. Residues 507–531 are disordered; that stretch reads LLAGPWTKPSVAATHPTVQHPQGHN. Over residues 522 to 531 the composition is skewed to polar residues; sequence PTVQHPQGHN.

The chain is PHD finger protein 21B (PHF21B) from Homo sapiens (Human).